Here is a 90-residue protein sequence, read N- to C-terminus: Protein LURE 1.4 (90 aa).

The first 19 residues, 1–19 (MKCPSIFLTLLIFVSSCTS), serve as a signal peptide directing secretion. N23 carries an N-linked (GlcNAc...) asparagine glycan. 3 disulfides stabilise this stretch: C58–C75, C61–C82, and C65–C84. The tract at residues 67-87 (RRGKYIRTCSFERKLCRCSIS) is PRK6 binding.

This sequence belongs to the DEFL family. Binds to PRK6 LRRs. As to expression, expressed in the pistil. Detected exclusively in the synergid cells.

The protein localises to the secreted. Its function is as follows. Pollen tube attractants guiding pollen tubes to the ovular micropyle. The sequence is that of Protein LURE 1.4 from Arabidopsis thaliana (Mouse-ear cress).